Reading from the N-terminus, the 260-residue chain is Cystine transporter (260 aa).

The region spanning 1–67 (MVSLDDILGI…QLYCWKMTGD (67 aa)) is the PQ-loop 1 domain. 5 helical membrane passes run 7 to 28 (ILGIVYVTSWSISMYPPIITNW), 40 to 62 (FVMLNTAGYSYLVISIFLQLYCW), 81 to 102 (FWYCLHGCLMNVVLLTQVVAGA), 118 to 138 (WYLRILLASLAIFSLLTVQFM), and 151 to 175 (TLAYCNNLFLLKISMSLIKYIPQVT). The PQ-loop 2 domain occupies 162 to 212 (KISMSLIKYIPQVTHNSTRKSMDCFPIQGVFLDVTGGIASLLQLIWQLSND). N177 carries an N-linked (GlcNAc...) asparagine glycan. The next 2 membrane-spanning stretches (helical) occupy residues 185–205 (CFPIQGVFLDVTGGIASLLQL) and 227–247 (VGLSMVTLIFNFIFIMQWFVY).

This sequence belongs to the cystinosin family.

Its subcellular location is the endosome membrane. The protein localises to the vacuole membrane. The enzyme catalyses L-cystine(out) + H(+)(out) = L-cystine(in) + H(+)(in). Cystine/H(+) symporter that mediates export of cystine, the oxidized dimer of cysteine, from vacuoles/endodomes. The polypeptide is Cystine transporter (ERS1) (Saccharomyces cerevisiae (strain ATCC 204508 / S288c) (Baker's yeast)).